The chain runs to 176 residues: Large ribosomal subunit protein eL20 (176 aa).

Residue lysine 11 forms a Glycyl lysine isopeptide (Lys-Gly) (interchain with G-Cter in SUMO2) linkage. A Phosphotyrosine modification is found at tyrosine 63. Phosphoserine is present on serine 71. N6-succinyllysine is present on lysine 76. Phosphoserine is present on serine 123. Residues lysine 128 and lysine 170 each participate in a glycyl lysine isopeptide (Lys-Gly) (interchain with G-Cter in SUMO2) cross-link.

It belongs to the eukaryotic ribosomal protein eL20 family. As to quaternary structure, component of the large ribosomal subunit. Binds IPO9 with high affinity.

The protein localises to the cytoplasm. Its function is as follows. Component of the large ribosomal subunit. The ribosome is a large ribonucleoprotein complex responsible for the synthesis of proteins in the cell. This is Large ribosomal subunit protein eL20 (Rpl18a) from Mus musculus (Mouse).